A 513-amino-acid chain; its full sequence is Probable G-protein coupled receptor 176 (513 aa).

Residues 1–25 (MGHNGSWVSPNTSHPRNTSGAQAGA) are disordered. Residues 1–41 (MGHNGSWVSPNTSHPRNTSGAQAGANSSAFGELSEAQLYRQ) lie on the Extracellular side of the membrane. Residues Asn4, Asn11, Asn17, and Asn26 are each glycosylated (N-linked (GlcNAc...) asparagine). The chain crosses the membrane as a helical span at residues 42 to 64 (FTTTVQVVIFIGSLLGNFTVLWS). Over 65 to 77 (TCRTTVFKSVTNR) the chain is Cytoplasmic. Residues 78–98 (FIKNLACSGICASVVCVPFDI) form a helical membrane-spanning segment. Topologically, residues 99-108 (ILSTSPHCCW) are extracellular. The helical transmembrane segment at 109–129 (WIYTMLFCKVLKFLHKVFCSV) threads the bilayer. Residues 130-157 (TVLSFPAIALDRYYSVLYPLERKISDAK) lie on the Cytoplasmic side of the membrane. The helical transmembrane segment at 158–177 (SRELVMYIWAHAVVASVPVF) threads the bilayer. Residues 178–204 (AVTNVADIYATSTCTEVWSNSLGHLVY) lie on the Extracellular side of the membrane. Residues 205–225 (VLIYNVTTVIVPVAVVFLFLI) traverse the membrane as a helical segment. The Cytoplasmic segment spans residues 226 to 264 (LIRRALSASQKKKVIIAALRTPQNTISIPYASQREAELH). The helical transmembrane segment at 265–285 (ATLLSMVTVFILCSVPYATLV) threads the bilayer. Over 286 to 301 (VYQTVLNVPNTSVFLL) the chain is Extracellular. The helical transmembrane segment at 302–322 (LTAIWLPKVSLLANPVLFLTV) threads the bilayer. Residues 323 to 513 (NRSVRKCLVG…KVSIFPKVDS (191 aa)) are Cytoplasmic-facing. The disordered stretch occupies residues 404–432 (VLTSSPEGEESQLAPSVPPPGTVDSVSRV).

This sequence belongs to the G-protein coupled receptor 1 family. As to expression, expressed in brain, lung, heart, stomach, intestine, cultured aortic smooth muscle cells and cardiac myocytes.

The protein resides in the cell membrane. Functionally, orphan receptor involved in normal circadian rhythm behavior. Acts through the G-protein subclass G(z)-alpha and has an agonist-independent basal activity to repress cAMP production. The polypeptide is Probable G-protein coupled receptor 176 (Gpr176) (Rattus norvegicus (Rat)).